A 157-amino-acid polypeptide reads, in one-letter code: Small ribosomal subunit protein uS7 (157 aa).

This sequence belongs to the universal ribosomal protein uS7 family. Part of the 30S ribosomal subunit. Contacts proteins S9 and S11.

Its function is as follows. One of the primary rRNA binding proteins, it binds directly to 16S rRNA where it nucleates assembly of the head domain of the 30S subunit. Is located at the subunit interface close to the decoding center, probably blocks exit of the E-site tRNA. This is Small ribosomal subunit protein uS7 from Desulfotalea psychrophila (strain LSv54 / DSM 12343).